The sequence spans 104 residues: Complex III assembly factor LYRM7 (104 aa).

Phosphoserine is present on Ser-60.

This sequence belongs to the complex I LYR family. In terms of assembly, interacts with UQCRFS1.

It localises to the mitochondrion matrix. Assembly factor required for Rieske Fe-S protein UQCRFS1 incorporation into the cytochrome b-c1 (CIII) complex. Functions as a chaperone, binding to this subunit within the mitochondrial matrix and stabilizing it prior to its translocation and insertion into the late CIII dimeric intermediate within the mitochondrial inner membrane. This Mus musculus (Mouse) protein is Complex III assembly factor LYRM7 (Lyrm7).